A 406-amino-acid polypeptide reads, in one-letter code: DNA primase large subunit PriL (406 aa).

Residues cysteine 302, cysteine 375, cysteine 384, and cysteine 389 each contribute to the [4Fe-4S] cluster site.

Belongs to the eukaryotic-type primase large subunit family. Heterodimer of a small subunit (PriS) and a large subunit (PriL). It depends on [4Fe-4S] cluster as a cofactor.

Its function is as follows. Regulatory subunit of DNA primase, an RNA polymerase that catalyzes the synthesis of short RNA molecules used as primers for DNA polymerase during DNA replication. Stabilizes and modulates the activity of the small subunit, increasing the rate of DNA synthesis, and conferring RNA synthesis capability. The DNA polymerase activity may enable DNA primase to also catalyze primer extension after primer synthesis. May also play a role in DNA repair. The sequence is that of DNA primase large subunit PriL from Methanopyrus kandleri (strain AV19 / DSM 6324 / JCM 9639 / NBRC 100938).